The chain runs to 346 residues: Elongation factor Ts (346 aa).

An involved in Mg(2+) ion dislocation from EF-Tu region spans residues T80 to V83.

The protein belongs to the EF-Ts family.

Its subcellular location is the cytoplasm. Functionally, associates with the EF-Tu.GDP complex and induces the exchange of GDP to GTP. It remains bound to the aminoacyl-tRNA.EF-Tu.GTP complex up to the GTP hydrolysis stage on the ribosome. The chain is Elongation factor Ts from Streptococcus uberis (strain ATCC BAA-854 / 0140J).